We begin with the raw amino-acid sequence, 314 residues long: Mevalonate kinase (314 aa).

103-109 (GLGTSAA) lines the ATP pocket. Residue Asp150 is the Proton acceptor of the active site.

This sequence belongs to the GHMP kinase family. Mevalonate kinase subfamily. As to quaternary structure, homodimer. The cofactor is Mg(2+).

The protein resides in the cytoplasm. The catalysed reaction is (R)-mevalonate + ATP = (R)-5-phosphomevalonate + ADP + H(+). It functions in the pathway isoprenoid biosynthesis; isopentenyl diphosphate biosynthesis via mevalonate pathway; isopentenyl diphosphate from (R)-mevalonate: step 1/3. Functionally, catalyzes the phosphorylation of (R)-mevalonate (MVA) to (R)-mevalonate 5-phosphate (MVAP). Functions in the mevalonate (MVA) pathway leading to isopentenyl diphosphate (IPP), a key precursor for the biosynthesis of isoprenoid compounds such as archaeal membrane lipids. This chain is Mevalonate kinase, found in Saccharolobus solfataricus (strain ATCC 35092 / DSM 1617 / JCM 11322 / P2) (Sulfolobus solfataricus).